Reading from the N-terminus, the 210-residue chain is Ribosomal RNA small subunit methyltransferase G (210 aa).

S-adenosyl-L-methionine-binding positions include Leu-78, 124 to 125 (IE), and Arg-138.

Belongs to the methyltransferase superfamily. RNA methyltransferase RsmG family.

The protein resides in the cytoplasm. It catalyses the reaction guanosine(527) in 16S rRNA + S-adenosyl-L-methionine = N(7)-methylguanosine(527) in 16S rRNA + S-adenosyl-L-homocysteine. Its function is as follows. Specifically methylates the N7 position of guanine in position 527 of 16S rRNA. This is Ribosomal RNA small subunit methyltransferase G from Bordetella bronchiseptica (strain ATCC BAA-588 / NCTC 13252 / RB50) (Alcaligenes bronchisepticus).